We begin with the raw amino-acid sequence, 442 residues long: Probable folate-biopterin transporter 7 (442 aa).

Helical transmembrane passes span 23 to 43 (LGFG…ANFF), 64 to 82 (LPMV…VYFF), 87 to 107 (IPYI…IAFL), 114 to 134 (ILAL…VEVA), 158 to 178 (FVWM…GIAI), 184 to 204 (QSTF…TINI), 241 to 261 (IAWI…MFFY), 270 to 290 (ASLL…WGFA), 302 to 322 (KLLT…LLFV), 335 to 355 (VYVL…ILPF), 379 to 399 (IALA…FVGV), and 410 to 430 (GLAI…WIYD).

This sequence belongs to the major facilitator superfamily. Folate-biopterin transporter (TC 2.A.71) family.

Its subcellular location is the membrane. In terms of biological role, could mediate folate transport. This is Probable folate-biopterin transporter 7 from Arabidopsis thaliana (Mouse-ear cress).